A 513-amino-acid polypeptide reads, in one-letter code: MKSVNHLVLTPGSLSLAQLREISRHKLTLELAPEAINDINISAQIVQKVLDEGRTVYGINTGFGLLANTKIAPEDLQLLQRSIVLSHAAGTGQYMQDATVRLMMVLKINSLSRGFSGIRLEVINFLISLVNAEVYPCVPEKGSVGASGDLAPLAHMCLPLLGEGEMSYQGQIISAAEGLEIAGLKPIDLAAKEGLALLNGTQASTALALEGLFHAEDLFAASSVIGAMSVEAAMGSRSPFDPRIHAARGQKGQIDSAMVFRYLLGEESEISLSHANCEKVQDPYSLRCQPQVLGACLTQIRQAAEVLATEANGVTDNPLVFQDTGDIISGGNFHAEPVAMAADNLAIAIAELGAIAERRIALLIDSSLSKLPPFLVKNGGVNSGFMIAQVTAAALASENKTYAHPASVDSLPTSANQEDHVSMATFAARRLRDMSENTRGVLAIELLAAAQGLDFRAPLTPSKAVAQAKAELREVVAYYDKDRYFAPDIEAATDLLYTASFNAYLPLGVLPSL.

Positions 146–148 (ASG) form a cross-link, 5-imidazolinone (Ala-Gly). The residue at position 147 (Ser147) is a 2,3-didehydroalanine (Ser).

The protein belongs to the PAL/histidase family. Post-translationally, contains an active site 4-methylidene-imidazol-5-one (MIO), which is formed autocatalytically by cyclization and dehydration of residues Ala-Ser-Gly.

The protein resides in the cytoplasm. The catalysed reaction is L-histidine = trans-urocanate + NH4(+). It functions in the pathway amino-acid degradation; L-histidine degradation into L-glutamate; N-formimidoyl-L-glutamate from L-histidine: step 1/3. The protein is Histidine ammonia-lyase of Shewanella oneidensis (strain ATCC 700550 / JCM 31522 / CIP 106686 / LMG 19005 / NCIMB 14063 / MR-1).